The following is a 146-amino-acid chain: 1,4-dihydroxy-2-naphthoyl-CoA hydrolase (146 aa).

The active site involves aspartate 15.

The protein belongs to the 4-hydroxybenzoyl-CoA thioesterase family. DHNA-CoA hydrolase subfamily.

It catalyses the reaction 1,4-dihydroxy-2-naphthoyl-CoA + H2O = 1,4-dihydroxy-2-naphthoate + CoA + H(+). Its pathway is cofactor biosynthesis; phylloquinone biosynthesis. The protein operates within quinol/quinone metabolism; 1,4-dihydroxy-2-naphthoate biosynthesis; 1,4-dihydroxy-2-naphthoate from chorismate: step 7/7. In terms of biological role, catalyzes the hydrolysis of 1,4-dihydroxy-2-naphthoyl-CoA (DHNA-CoA) to 1,4-dihydroxy-2-naphthoate (DHNA), a reaction involved in phylloquinone (vitamin K1) biosynthesis. This chain is 1,4-dihydroxy-2-naphthoyl-CoA hydrolase, found in Picosynechococcus sp. (strain ATCC 27264 / PCC 7002 / PR-6) (Agmenellum quadruplicatum).